The following is a 281-amino-acid chain: Probable endonuclease 4 (281 aa).

The Zn(2+) site is built by His-69, His-109, Glu-145, Asp-179, His-182, His-216, Asp-229, His-231, and Glu-261.

It belongs to the AP endonuclease 2 family. It depends on Zn(2+) as a cofactor.

The enzyme catalyses Endonucleolytic cleavage to 5'-phosphooligonucleotide end-products.. Endonuclease IV plays a role in DNA repair. It cleaves phosphodiester bonds at apurinic or apyrimidinic (AP) sites, generating a 3'-hydroxyl group and a 5'-terminal sugar phosphate. The sequence is that of Probable endonuclease 4 from Proteus mirabilis (strain HI4320).